We begin with the raw amino-acid sequence, 204 residues long: UPF0637 protein Lm4b_01081 (204 aa).

It belongs to the UPF0637 family.

This is UPF0637 protein Lm4b_01081 from Listeria monocytogenes serotype 4b (strain CLIP80459).